The chain runs to 205 residues: COP9 signalosome complex subunit 7 (205 aa).

A PCI domain is found at 1–135 (MEEKISQAID…QTLHVSWALE (135 aa)). Ser-183 is modified (phosphoserine).

The protein belongs to the CSN7/EIF3M family. CSN7 subfamily. As to quaternary structure, component of the COP9 signalosome (CSN) complex.

Its function is as follows. Component of the COP9 signalosome (CSN) complex that acts as an regulator of the ubiquitin (Ubl) conjugation pathway by mediating the deneddylation of the cullin subunit of SCF-type E3 ubiquitin-protein ligase complexes. This is COP9 signalosome complex subunit 7 (csn71) from Schizosaccharomyces pombe (strain 972 / ATCC 24843) (Fission yeast).